The following is a 389-amino-acid chain: Teichoic acid ribitol-phosphate primase (389 aa).

Belongs to the CDP-glycerol glycerophosphotransferase family.

It localises to the cell membrane. It catalyses the reaction 4-O-[(2R)-glycerylphospho]-N-acetyl-beta-D-mannosaminyl-(1-&gt;4)-N-acetyl-alpha-D-glucosaminyl di-trans,octa-cis-undecaprenyl diphosphate + CDP-L-ribitol = 4-O-[1-D-ribitylphospho-(2R)-1-glycerylphospho]-N-acetyl-beta-D-mannosaminyl-(1-&gt;4)-N-acetyl-alpha-D-glucosaminyl di-trans,octa-cis-undecaprenyl diphosphate + CMP + H(+). It participates in cell wall biogenesis; poly(ribitol phosphate) teichoic acid biosynthesis. Its function is as follows. Catalyzes the addition of a single ribitol phosphate unit onto the glycerol phosphate of the linkage unit, as a primer for polymerisation by TarL. This Bacillus spizizenii (strain ATCC 23059 / NRRL B-14472 / W23) (Bacillus subtilis subsp. spizizenii) protein is Teichoic acid ribitol-phosphate primase (tarK).